A 108-amino-acid chain; its full sequence is uncharacterized protein (108 aa).

Positions 81–108 (TNHHQQQQNHQNQQQQQQQPNGIFENNI) are disordered. Low complexity predominate over residues 83-99 (HHQQQQNHQNQQQQQQQ).

This is an uncharacterized protein from Dictyostelium discoideum (Social amoeba).